Consider the following 94-residue polypeptide: Integration host factor subunit beta (94 aa).

The protein belongs to the bacterial histone-like protein family. As to quaternary structure, heterodimer of an alpha and a beta chain.

Its function is as follows. This protein is one of the two subunits of integration host factor, a specific DNA-binding protein that functions in genetic recombination as well as in transcriptional and translational control. This Buchnera aphidicola subsp. Acyrthosiphon pisum (strain 5A) protein is Integration host factor subunit beta.